The primary structure comprises 511 residues: Exodeoxyribonuclease 7 large subunit (511 aa).

Belongs to the XseA family. As to quaternary structure, heterooligomer composed of large and small subunits.

The protein localises to the cytoplasm. The catalysed reaction is Exonucleolytic cleavage in either 5'- to 3'- or 3'- to 5'-direction to yield nucleoside 5'-phosphates.. Bidirectionally degrades single-stranded DNA into large acid-insoluble oligonucleotides, which are then degraded further into small acid-soluble oligonucleotides. This chain is Exodeoxyribonuclease 7 large subunit, found in Brucella abortus (strain S19).